We begin with the raw amino-acid sequence, 250 residues long: Cobalt transport protein CbiM (250 aa).

The first 26 residues, 1–26 (MNKKEKRIVAIAAAFALCFGISPAVN), serve as a signal peptide directing secretion. The next 6 helical transmembrane spans lie at 38–58 (KYCI…YFSI), 68–88 (SITM…LKIP), 102–122 (LGAI…VLIF), 134–154 (TLGA…FGIY), 165–185 (LSGI…VTSI), and 209–229 (FAPT…VIMI).

Belongs to the CbiM family. In terms of assembly, forms an energy-coupling factor (ECF) transporter complex composed of an ATP-binding protein (A component, CbiO), a transmembrane protein (T component, CbiQ) and 2 possible substrate-capture proteins (S components, CbiM and CbiN) of unknown stoichimetry.

The protein localises to the cell membrane. The protein operates within cofactor biosynthesis; adenosylcobalamin biosynthesis. In terms of biological role, part of the energy-coupling factor (ECF) transporter complex CbiMNOQ involved in cobalt import. In Lachnoclostridium phytofermentans (strain ATCC 700394 / DSM 18823 / ISDg) (Clostridium phytofermentans), this protein is Cobalt transport protein CbiM.